The chain runs to 305 residues: Protoheme IX farnesyltransferase 2 (305 aa).

7 helical membrane-spanning segments follow: residues 38–58 (LITT…SFLG), 60–80 (LNTV…SCAV), 115–135 (ILLI…AAVI), 157–177 (INTV…WTAV), 181–201 (IGVV…PHFL), 236–256 (VACL…IVIL), and 285–305 (FVYS…FTLF).

It belongs to the UbiA prenyltransferase family. Protoheme IX farnesyltransferase subfamily. As to quaternary structure, interacts with CtaA.

It is found in the cell membrane. It catalyses the reaction heme b + (2E,6E)-farnesyl diphosphate + H2O = Fe(II)-heme o + diphosphate. It participates in porphyrin-containing compound metabolism; heme O biosynthesis; heme O from protoheme: step 1/1. Its function is as follows. Converts heme B (protoheme IX) to heme O by substitution of the vinyl group on carbon 2 of heme B porphyrin ring with a hydroxyethyl farnesyl side group. The polypeptide is Protoheme IX farnesyltransferase 2 (Bacillus velezensis (strain DSM 23117 / BGSC 10A6 / LMG 26770 / FZB42) (Bacillus amyloliquefaciens subsp. plantarum)).